The chain runs to 496 residues: Cytochrome P450 71D179 (496 aa).

The helical; Signal-anchor for type II membrane protein transmembrane segment at 1–21 threads the bilayer; it reads MDISISWVVIIVSVLSYLILM. Heme is bound at residue Cys435.

The protein belongs to the cytochrome P450 family. Heme serves as cofactor.

It is found in the membrane. Its pathway is secondary metabolite biosynthesis; terpenoid biosynthesis. Functionally, involved in the biosynthesis of phenolic monoterpenes natural products thymol and carvacrol which have a broad range of biological activities acting as antimicrobial compounds, insecticides, antioxidants and pharmaceutical agents. Catalyzes probably the C3-hydroxylation of gamma-terpinene to produce thymol. This chain is Cytochrome P450 71D179, found in Thymus vulgaris (Thyme).